The primary structure comprises 273 residues: Proteasome subunit beta type-10 (273 aa).

At methionine 1 the chain carries N-acetylmethionine. A propeptide spans 1-39 (MLKQAVEHRGGFSFENCQRNASLEHVLPGLRVPLARKTG) (removed in mature form). The active-site Nucleophile is the threonine 40. Phosphoserine is present on serine 230.

This sequence belongs to the peptidase T1B family. As to quaternary structure, the 26S proteasome consists of a 20S proteasome core and two 19S regulatory subunits. The 20S proteasome core is composed of 28 subunits that are arranged in four stacked rings, resulting in a barrel-shaped structure. The two end rings are each formed by seven alpha subunits, and the two central rings are each formed by seven beta subunits. The catalytic chamber with the active sites is on the inside of the barrel. Component of the immunoproteasome, where it displaces the equivalent housekeeping subunit PSMB7. Component of the spermatoproteasome, a form of the proteasome specifically found in testis. Autocleaved. The resulting N-terminal Thr residue of the mature subunit is responsible for the nucleophile proteolytic activity.

It localises to the cytoplasm. The protein resides in the nucleus. The catalysed reaction is Cleavage of peptide bonds with very broad specificity.. Its function is as follows. The proteasome is a multicatalytic proteinase complex which is characterized by its ability to cleave peptides with Arg, Phe, Tyr, Leu, and Glu adjacent to the leaving group at neutral or slightly basic pH. The proteasome has an ATP-dependent proteolytic activity. This subunit is involved in antigen processing to generate class I binding peptides. This Rattus norvegicus (Rat) protein is Proteasome subunit beta type-10 (Psmb10).